The primary structure comprises 264 residues: Diphthine synthase (264 aa).

Residues Leu10, Asp87, Val90, 115 to 116, Leu166, Ala209, and His234 each bind S-adenosyl-L-methionine; that span reads SI.

Belongs to the diphthine synthase family. Homodimer.

The catalysed reaction is 2-[(3S)-amino-3-carboxypropyl]-L-histidyl-[translation elongation factor 2] + 3 S-adenosyl-L-methionine = diphthine-[translation elongation factor 2] + 3 S-adenosyl-L-homocysteine + 3 H(+). Its pathway is protein modification; peptidyl-diphthamide biosynthesis. S-adenosyl-L-methionine-dependent methyltransferase that catalyzes the trimethylation of the amino group of the modified target histidine residue in translation elongation factor 2 (EF-2), to form an intermediate called diphthine. The three successive methylation reactions represent the second step of diphthamide biosynthesis. The sequence is that of Diphthine synthase from Thermococcus onnurineus (strain NA1).